Consider the following 518-residue polypeptide: Probable alginate O-acetylase AlgI (518 aa).

A run of 8 helical transmembrane segments spans residues 2 to 24 (VFSSNVFLFMFLPIFLGLYYLSG), 39 to 61 (FYAWWRVDFLALFIGVTVWNYWI), 78 to 100 (WLLLGVIVDLCILGYFKYANFGV), 115 to 137 (FILTHVLLPIGISFYVFESISYI), 150 to 172 (NLIDFAAFVAIFPHLIAGPVLRF), 319 to 341 (GLWHGANVTYIIWGAWHGMWLAI), 354 to 373 (FNVIRWALTFLLVVIGWVIF), and 402 to 424 (ASLTGLQVATLVVAYATLAFFGL). Histidine 322 is a catalytic residue. The segment at 435–456 (SGKSARADGPATEQPGTIKAVP) is disordered. Residues 493–515 (LILLLFVASILKLSAQSFSPFLY) traverse the membrane as a helical segment.

Belongs to the membrane-bound acyltransferase family.

It is found in the cell inner membrane. It participates in glycan biosynthesis; alginate biosynthesis. Together with AlgJ and AlgF, forms an inner membrane complex which probably interacts with the alginate polymerization-transport complex and adds acetyl groups at the O-2 and O-3 positions of mannuronate residues. Acetylation of alginate is important for the architecture of biofilms and increases the ability of alginate to act as a defense barrier. This chain is Probable alginate O-acetylase AlgI (algI), found in Pseudomonas syringae pv. tomato (strain ATCC BAA-871 / DC3000).